The sequence spans 66 residues: Beta-toxin Cll1m (66 aa).

The 66-residue stretch at 1–66 folds into the LCN-type CS-alpha/beta domain; sequence KEGYIVNLST…VWPLPKKTCT (66 aa). Disulfide bonds link C12/C65, C16/C41, C25/C46, and C29/C48. T66 carries the post-translational modification Threonine amide.

This sequence belongs to the long (4 C-C) scorpion toxin superfamily. Sodium channel inhibitor family. Beta subfamily. In terms of tissue distribution, expressed by the venom gland.

Its subcellular location is the secreted. In terms of biological role, beta toxins bind voltage-independently at site-4 of sodium channels (Nav) and shift the voltage of activation toward more negative potentials thereby affecting sodium channel activation and promoting spontaneous and repetitive firing. The protein is Beta-toxin Cll1m of Centruroides limpidus (Mexican scorpion).